Reading from the N-terminus, the 299-residue chain is ATP phosphoribosyltransferase (299 aa).

Belongs to the ATP phosphoribosyltransferase family. Long subfamily. Requires Mg(2+) as cofactor.

The protein localises to the cytoplasm. The enzyme catalyses 1-(5-phospho-beta-D-ribosyl)-ATP + diphosphate = 5-phospho-alpha-D-ribose 1-diphosphate + ATP. It functions in the pathway amino-acid biosynthesis; L-histidine biosynthesis; L-histidine from 5-phospho-alpha-D-ribose 1-diphosphate: step 1/9. Feedback inhibited by histidine. Catalyzes the condensation of ATP and 5-phosphoribose 1-diphosphate to form N'-(5'-phosphoribosyl)-ATP (PR-ATP). Has a crucial role in the pathway because the rate of histidine biosynthesis seems to be controlled primarily by regulation of HisG enzymatic activity. This chain is ATP phosphoribosyltransferase, found in Shewanella denitrificans (strain OS217 / ATCC BAA-1090 / DSM 15013).